The sequence spans 315 residues: 4-diphosphocytidyl-2-C-methyl-D-erythritol kinase (315 aa).

Lys11 is an active-site residue. Residue 99–109 (PMAAGLAGGSA) participates in ATP binding. Asp141 is a catalytic residue.

It belongs to the GHMP kinase family. IspE subfamily.

It carries out the reaction 4-CDP-2-C-methyl-D-erythritol + ATP = 4-CDP-2-C-methyl-D-erythritol 2-phosphate + ADP + H(+). Its pathway is isoprenoid biosynthesis; isopentenyl diphosphate biosynthesis via DXP pathway; isopentenyl diphosphate from 1-deoxy-D-xylulose 5-phosphate: step 3/6. Functionally, catalyzes the phosphorylation of the position 2 hydroxy group of 4-diphosphocytidyl-2C-methyl-D-erythritol. The protein is 4-diphosphocytidyl-2-C-methyl-D-erythritol kinase of Synechocystis sp. (strain ATCC 27184 / PCC 6803 / Kazusa).